Here is a 159-residue protein sequence, read N- to C-terminus: Alpha-lactalbumin (159 aa).

A signal peptide spans 1 to 19 (MMRFVPLFLACISLPAFQA). The 123-residue stretch at 20 to 142 (TEFTKCEVSH…KLEQWRCEKP (123 aa)) folds into the C-type lysozyme domain. Cystine bridges form between Cys25–Cys139, Cys47–Cys130, Cys80–Cys96, and Cys92–Cys110. N-linked (GlcNAc...) asparagine glycosylation occurs at Asn64. Ca(2+) contacts are provided by Lys98, Asp101, Asp106, and Asp107.

Belongs to the glycosyl hydrolase 22 family. Lactose synthase (LS) is a heterodimer of a catalytic component, beta1,4-galactosyltransferase (beta4Gal-T1) and a regulatory component, alpha-lactalbumin (LA). In terms of tissue distribution, mammary gland specific. Secreted in milk.

It localises to the secreted. Regulatory subunit of lactose synthase, changes the substrate specificity of galactosyltransferase in the mammary gland making glucose a good acceptor substrate for this enzyme. This enables LS to synthesize lactose, the major carbohydrate component of milk. In other tissues, galactosyltransferase transfers galactose onto the N-acetylglucosamine of the oligosaccharide chains in glycoproteins. This Rattus norvegicus (Rat) protein is Alpha-lactalbumin (Lalba).